The primary structure comprises 436 residues: Trigger factor (436 aa).

The region spanning 163–248 (GDRVTVDFEG…VKKIEAANLP (86 aa)) is the PPIase FKBP-type domain.

It belongs to the FKBP-type PPIase family. Tig subfamily.

It is found in the cytoplasm. It catalyses the reaction [protein]-peptidylproline (omega=180) = [protein]-peptidylproline (omega=0). Involved in protein export. Acts as a chaperone by maintaining the newly synthesized protein in an open conformation. Functions as a peptidyl-prolyl cis-trans isomerase. This chain is Trigger factor, found in Delftia acidovorans (strain DSM 14801 / SPH-1).